We begin with the raw amino-acid sequence, 119 residues long: V-type proton ATPase subunit F (119 aa).

The protein belongs to the V-ATPase F subunit family. V-ATPase is a heteromultimeric enzyme made up of two complexes: the ATP-hydrolytic V1 complex and the proton translocation V0 complex. The V1 complex consists of three catalytic AB heterodimers that form a heterohexamer, three peripheral stalks each consisting of EG heterodimers, one central rotor including subunits D and F, and the regulatory subunits C and H. The proton translocation complex V0 consists of the proton transport subunit a, a ring of proteolipid subunits c9c'', rotary subunit d, subunits e and f, and the accessory subunits ATP6AP1/Ac45 and ATP6AP2/PRR.

It localises to the cytoplasmic vesicle. The protein localises to the secretory vesicle. Its subcellular location is the synaptic vesicle membrane. The protein resides in the clathrin-coated vesicle membrane. In terms of biological role, subunit of the V1 complex of vacuolar(H+)-ATPase (V-ATPase), a multisubunit enzyme composed of a peripheral complex (V1) that hydrolyzes ATP and a membrane integral complex (V0) that translocates protons. V-ATPase is responsible for acidifying and maintaining the pH of intracellular compartments and in some cell types, is targeted to the plasma membrane, where it is responsible for acidifying the extracellular environment. In Mus musculus (Mouse), this protein is V-type proton ATPase subunit F (Atp6v1f).